We begin with the raw amino-acid sequence, 411 residues long: MAESAFPSAQQPLRVGTKDDKAAAFQKISEEDEYEVTSPTDPTFRSANAAAASSSTGSPFFGGSYGENSGPIRFNRSPFDNGPREEDEEGADEFPPEDIRPTGAANQGFPNNYALGRRTSVSAESLNPTSAGSDSWTPPYHEKTEEQLSRLKTAVSSNFLFSHLDDDQFKSVLDALVEKPIPAKGIKVISQGDAGDYFYIVENGHFDFMIHPSGSVQPGPDGMGNKVGSVGPGGSFGELALMYNAPRAATVVSVDPKSTLWALDRITFRRILMDSAFQRRRMYEAFLEEVPLLSSLKPYERAKIADALDAIKYPAGSTIIAEGDPGDAFYLLESGEADAFKNGVEGPVKSYKRGDYFGELALLDDKPRAASIVAKTDVKVAKLGRDGFKRLLGPVEDIMRRAEYESNPVPA.

The interval 1-144 (MAESAFPSAQ…SWTPPYHEKT (144 aa)) is disordered. Positions 23–159 (AAFQKISEED…RLKTAVSSNF (137 aa)) are dimerization and phosphorylation. Over residues 46 to 58 (SANAAAASSSTGS) the composition is skewed to low complexity. Acidic residues predominate over residues 85–96 (EEDEEGADEFPP). A compositionally biased stretch (polar residues) spans 119–136 (TSVSAESLNPTSAGSDSW). Phosphoserine is present on serine 120. 3',5'-cyclic AMP is bound by residues 160–289 (LFSH…FLEE), glutamate 238, arginine 247, 292–411 (LLSS…PVPA), glutamate 359, and arginine 368.

This sequence belongs to the cAMP-dependent kinase regulatory chain family. In terms of assembly, tetramer, composed of 2 regulatory (R) and 2 catalytic (C) subunits. In the presence of cAMP it dissociates into 2 active monomeric C subunits and an R dimer.

In Aspergillus niger, this protein is cAMP-dependent protein kinase regulatory subunit (pkaR).